The following is an 89-amino-acid chain: Large ribosomal subunit protein L37-2 (89 aa).

4 residues coordinate Zn(2+): Cys19, Cys22, Cys34, and Cys37. A C4-type zinc finger spans residues 19 to 37 (CRRCGNSSYHLQKSKCSQC).

Belongs to the eukaryotic ribosomal protein eL37 family. The cofactor is Zn(2+).

Binds to the 23S rRNA. This is Large ribosomal subunit protein L37-2 from Drosophila melanogaster (Fruit fly).